We begin with the raw amino-acid sequence, 396 residues long: ATP synthase subunit beta, chloroplastic (396 aa).

Residue 74-81 coordinates ATP; that stretch reads GGAGVGKT.

The protein belongs to the ATPase alpha/beta chains family. F-type ATPases have 2 components, CF(1) - the catalytic core - and CF(0) - the membrane proton channel. CF(1) has five subunits: alpha(3), beta(3), gamma(1), delta(1), epsilon(1). CF(0) has four main subunits: a(1), b(1), b'(1) and c(9-12).

The protein resides in the plastid. Its subcellular location is the chloroplast thylakoid membrane. It catalyses the reaction ATP + H2O + 4 H(+)(in) = ADP + phosphate + 5 H(+)(out). Its function is as follows. Produces ATP from ADP in the presence of a proton gradient across the membrane. The catalytic sites are hosted primarily by the beta subunits. The polypeptide is ATP synthase subunit beta, chloroplastic (Adiantum raddianum (Maidenhair fern)).